Consider the following 420-residue polypeptide: Dihydrolipoyllysine-residue succinyltransferase component of 2-oxoglutarate dehydrogenase complex (420 aa).

The 76-residue stretch at 3–78 (KINILVPDLP…ISQQTLGEIN (76 aa)) folds into the Lipoyl-binding domain. Residue K44 is modified to N6-lipoyllysine. Active-site residues include H391 and D395.

This sequence belongs to the 2-oxoacid dehydrogenase family. As to quaternary structure, forms a 24-polypeptide structural core with octahedral symmetry. Part of the 2-oxoglutarate dehydrogenase (OGDH) complex composed of E1 (2-oxoglutarate dehydrogenase), E2 (dihydrolipoamide succinyltransferase) and E3 (dihydrolipoamide dehydrogenase); the complex contains multiple copies of the three enzymatic components (E1, E2 and E3). Requires (R)-lipoate as cofactor.

It carries out the reaction N(6)-[(R)-dihydrolipoyl]-L-lysyl-[protein] + succinyl-CoA = N(6)-[(R)-S(8)-succinyldihydrolipoyl]-L-lysyl-[protein] + CoA. It functions in the pathway amino-acid degradation; L-lysine degradation via saccharopine pathway; glutaryl-CoA from L-lysine: step 6/6. Its function is as follows. E2 component of the 2-oxoglutarate dehydrogenase (OGDH) complex which catalyzes the second step in the conversion of 2-oxoglutarate to succinyl-CoA and CO(2). The polypeptide is Dihydrolipoyllysine-residue succinyltransferase component of 2-oxoglutarate dehydrogenase complex (sucB) (Buchnera aphidicola subsp. Acyrthosiphon pisum (strain APS) (Acyrthosiphon pisum symbiotic bacterium)).